A 312-amino-acid chain; its full sequence is Carbamate kinase 2 (312 aa).

This sequence belongs to the carbamate kinase family.

The protein resides in the cytoplasm. The catalysed reaction is hydrogencarbonate + NH4(+) + ATP = carbamoyl phosphate + ADP + H2O + H(+). It functions in the pathway metabolic intermediate metabolism; carbamoyl phosphate degradation; CO(2) and NH(3) from carbamoyl phosphate: step 1/1. In Enterococcus faecalis (strain ATCC 700802 / V583), this protein is Carbamate kinase 2 (arcC2).